The chain runs to 344 residues: Serpentine receptor class alpha-27 (344 aa).

A run of 7 helical transmembrane segments spans residues 28 to 48, 67 to 87, 128 to 148, 157 to 177, 203 to 223, 252 to 272, and 287 to 307; these read SIWM…TFYL, QILL…FLEI, GLLS…TVYV, MLIT…YGGV, AIFW…LLNI, ICSV…ALAI, and INIQ…VLIY.

This sequence belongs to the nematode receptor-like protein sra family.

It is found in the membrane. The sequence is that of Serpentine receptor class alpha-27 (sra-27) from Caenorhabditis elegans.